The chain runs to 542 residues: MNGKRPAEPGSDRAGKKVKKEVMAKFSDAVTEETLKKQVAEAWSRRTPFRHEAIVMDMDPFLHCVIPNFIQSQNFLEGLQKELLNLDFHEKYNDLYKFQQSDDLKKRREPHICALRKILFEHFRSWISDISKIDLESTIDMSCAKYEFSDALLCHDDELEGRRIAFILYLVPPWDASLGGTLDLFSVDEHFQPKQIVKSLIPSWNTLVFFEVSPVSFHQVSEVLSEEKSRLSISGWFHGPSLTRPPTYFEPLIARSPHIPQDHEILYDWINPTYLDMEYQAQIQEEFEESSEILLKEFLQPEKFAEVCEALERGRVEWSSRGPPNKRFYEKAEESQLPDILRDCMALFRSEAMFLLLSNFTGLKLHFLAPSEDEPEDKKERDAVSAAENTEEGTSHSSSEPENSWAATSDSSLQSEGPTDPEEDEAKKESSVPTCQGELRHWKTGHYTLIHDNSKTEFALDLLLYCGCEGWEPEYGGFTSYIAKGEDEELLTVNPENNSLALVYRDRETLKFVKHINHRSLEQKKSFPNRTGFWDFSFVYYE.

In terms of domain architecture, Fe2OG dioxygenase spans 134–239; that stretch reads DLESTIDMSC…RLSISGWFHG (106 aa). Fe cation is bound by residues His-155 and Asp-157. Tyr-169 lines the 2-oxoglutarate pocket. His-218 is a Fe cation binding site. Arg-230 contributes to the 2-oxoglutarate binding site. The disordered stretch occupies residues 371 to 435; it reads SEDEPEDKKE…AKKESSVPTC (65 aa). A compositionally biased stretch (polar residues) spans 395–417; it reads SHSSSEPENSWAATSDSSLQSEG.

It belongs to the TPA1 family. As to quaternary structure, monomer. Requires Fe(2+) as cofactor. It depends on L-ascorbate as a cofactor.

It localises to the cytoplasm. Its subcellular location is the nucleus. The enzyme catalyses [ribosomal protein uS12]-L-proline + 2-oxoglutarate + O2 = [ribosomal protein uS12]-(3S)-3-hydroxy-L-proline + succinate + CO2. Prolyl 3-hydroxylase that catalyzes 3-hydroxylation of 'Pro-62' of small ribosomal subunit uS12 (RPS23), thereby regulating protein translation termination efficiency. Involved in stress granule formation. In Bos taurus (Bovine), this protein is Prolyl 3-hydroxylase OGFOD1 (OGFOD1).